A 427-amino-acid polypeptide reads, in one-letter code: 3-phosphoshikimate 1-carboxyvinyltransferase (427 aa).

3-phosphoshikimate contacts are provided by Lys23, Ser24, and Arg28. Residue Lys23 participates in phosphoenolpyruvate binding. Phosphoenolpyruvate is bound by residues Gly97 and Arg125. The 3-phosphoshikimate site is built by Ser170, Ser171, Gln172, Ser198, Asp314, Asn337, and Lys341. Position 172 (Gln172) interacts with phosphoenolpyruvate. Catalysis depends on Asp314, which acts as the Proton acceptor. Phosphoenolpyruvate contacts are provided by Arg345, Arg387, and Lys412.

Belongs to the EPSP synthase family. In terms of assembly, monomer.

The protein localises to the cytoplasm. It carries out the reaction 3-phosphoshikimate + phosphoenolpyruvate = 5-O-(1-carboxyvinyl)-3-phosphoshikimate + phosphate. Its pathway is metabolic intermediate biosynthesis; chorismate biosynthesis; chorismate from D-erythrose 4-phosphate and phosphoenolpyruvate: step 6/7. Its function is as follows. Catalyzes the transfer of the enolpyruvyl moiety of phosphoenolpyruvate (PEP) to the 5-hydroxyl of shikimate-3-phosphate (S3P) to produce enolpyruvyl shikimate-3-phosphate and inorganic phosphate. This is 3-phosphoshikimate 1-carboxyvinyltransferase from Buchnera aphidicola subsp. Acyrthosiphon pisum (strain 5A).